The primary structure comprises 301 residues: Acetylglutamate kinase (301 aa).

Substrate-binding positions include 68 to 69, R90, and N195; that span reads GG.

This sequence belongs to the acetylglutamate kinase family. ArgB subfamily.

It localises to the cytoplasm. The catalysed reaction is N-acetyl-L-glutamate + ATP = N-acetyl-L-glutamyl 5-phosphate + ADP. The protein operates within amino-acid biosynthesis; L-arginine biosynthesis; N(2)-acetyl-L-ornithine from L-glutamate: step 2/4. In terms of biological role, catalyzes the ATP-dependent phosphorylation of N-acetyl-L-glutamate. This chain is Acetylglutamate kinase, found in Pseudomonas aeruginosa (strain LESB58).